A 349-amino-acid chain; its full sequence is MAENAYSKAGVDVEAGYQVVERIKKHVARTERIGAMGALGSFGGMFDLSSLNLKEPVLVSGTDGVGTKLLLAIEADKHDTIGIDCVAMCVNDILAQGAEPLFFLDYIATGKTDPVKMEQIVKGVADGCEQAGAALIGGETAEMPDMYGADDYDLAGFTVGAVEKQKLITEGAVQAGDTLIGIPSSGIHSNGYSLVRKIFFKDNEFTLDAEISELDVPLVEELLKPTRIYVKPVLEVLKEVTVHGITHVTGGGFVENLPRMLTNDLAVKVELGSWPMLPIFDVVKKYGQLNEMEMYEIFNMGIGMVLAVAKSDVEKTLEVLVQNGEAAYVIGEVTTRESNAVIFAGGKKG.

It belongs to the AIR synthase family.

Its subcellular location is the cytoplasm. The catalysed reaction is 2-formamido-N(1)-(5-O-phospho-beta-D-ribosyl)acetamidine + ATP = 5-amino-1-(5-phospho-beta-D-ribosyl)imidazole + ADP + phosphate + H(+). It functions in the pathway purine metabolism; IMP biosynthesis via de novo pathway; 5-amino-1-(5-phospho-D-ribosyl)imidazole from N(2)-formyl-N(1)-(5-phospho-D-ribosyl)glycinamide: step 2/2. This is Phosphoribosylformylglycinamidine cyclo-ligase from Listeria monocytogenes serovar 1/2a (strain ATCC BAA-679 / EGD-e).